The sequence spans 503 residues: 3-octaprenyl-4-hydroxybenzoate carboxy-lyase (503 aa).

Position 176 (asparagine 176) interacts with Mn(2+). Prenylated FMN-binding positions include 179–181 (IYR), 193–195 (RWL), and 198–199 (RG). Residue glutamate 242 participates in Mn(2+) binding. Catalysis depends on aspartate 303, which acts as the Proton donor.

Belongs to the UbiD family. As to quaternary structure, homohexamer. It depends on prenylated FMN as a cofactor. Mn(2+) is required as a cofactor.

It localises to the cell membrane. The enzyme catalyses a 4-hydroxy-3-(all-trans-polyprenyl)benzoate + H(+) = a 2-(all-trans-polyprenyl)phenol + CO2. It participates in cofactor biosynthesis; ubiquinone biosynthesis. Functionally, catalyzes the decarboxylation of 3-octaprenyl-4-hydroxy benzoate to 2-octaprenylphenol, an intermediate step in ubiquinone biosynthesis. The protein is 3-octaprenyl-4-hydroxybenzoate carboxy-lyase of Ralstonia pickettii (strain 12J).